Consider the following 68-residue polypeptide: Conotoxin Vc7.3 (68 aa).

The signal sequence occupies residues 1–24 (MIRMGFFLTLTVAVLLTSLICTEA). A propeptide spanning residues 25–45 (VPTDKRGMERLFDQVLLKDQR) is cleaved from the precursor. 3 disulfides stabilise this stretch: C47–C55, C50–C60, and C54–C65.

Belongs to the conotoxin U superfamily. As to expression, expressed by the venom duct.

It is found in the secreted. The protein is Conotoxin Vc7.3 of Conus victoriae (Queen Victoria cone).